A 130-amino-acid polypeptide reads, in one-letter code: Small ribosomal subunit protein uS9 (130 aa).

The disordered stretch occupies residues 108–130; it reads SREVERKKVGLRKARKRPQYSKR. The segment covering 116 to 130 has biased composition (basic residues); that stretch reads VGLRKARKRPQYSKR.

It belongs to the universal ribosomal protein uS9 family.

The sequence is that of Small ribosomal subunit protein uS9 from Cellvibrio japonicus (strain Ueda107) (Pseudomonas fluorescens subsp. cellulosa).